Reading from the N-terminus, the 473-residue chain is Phosphatidylserine synthase 1 (473 aa).

Ala-2 carries the post-translational modification N-acetylalanine. At 2 to 35 (ASCVGSRTLSKDDVNYRMHFRMINEQQVEDITID) the chain is on the cytoplasmic side. The chain crosses the membrane as a helical span at residues 36–56 (FFYRPHTITLLSFTIISLMYF). Over 57-72 (AFTRDDSVPEDNIWRG) the chain is Lumenal. A helical transmembrane segment spans residues 73–93 (ILSVIFFFLIISVLAFPNGPF). Residues 94 to 102 (TRPHPALWR) lie on the Cytoplasmic side of the membrane. The helical transmembrane segment at 103–123 (MVFGLSVLYFLFLVFLLFLNF) threads the bilayer. The Lumenal segment spans residues 124–186 (EQVKSLMYWL…AMKALLIRSY (63 aa)). A helical membrane pass occupies residues 187-207 (GLCWTISITWELTELFFMHLL). Residues 208 to 216 (PNFAECWWD) lie on the Cytoplasmic side of the membrane. The helical transmembrane segment at 217–237 (QVILDILLCNGGGIWLGMVVC) threads the bilayer. Residues 238–286 (RFLEMRTYHWASFKDIHTTTGKIKRAVLQFTPASWTYVRWFDPKSSFQR) lie on the Lumenal side of the membrane. The chain crosses the membrane as a helical span at residues 287-307 (VAGIYLFMIIWQLTELNTFFL). Residues 308 to 319 (KHIFVFQASHPL) are Cytoplasmic-facing. Residues 320-342 (SWGRILFIGCITAPTVRQYYAYL) form a helical membrane-spanning segment. Over 343-355 (TDTQCKRVGTQCW) the chain is Lumenal. The chain crosses the membrane as a helical span at residues 356-376 (VFGVIGFLEAIVCIKFGQDLF). The Cytoplasmic portion of the chain corresponds to 377–383 (SKTQILY). The chain crosses the membrane as a helical span at residues 384–404 (VMLWLLCVAFTTFLCLYGMVW). At 405–473 (YAEHYGHREK…SKVTNGVGKK (69 aa)) the chain is on the lumenal side. Phosphoserine occurs at positions 417, 425, 442, and 454. The segment at 428 to 473 (ISWHHGKGSKGSEDSPPKHSSNHESHSSRRRNRHSKSKVTNGVGKK) is disordered. The segment covering 437 to 454 (KGSEDSPPKHSSNHESHS) has biased composition (basic and acidic residues). A compositionally biased stretch (basic residues) spans 455–464 (SRRRNRHSKS).

Belongs to the phosphatidyl serine synthase family. As to expression, expressed in kidney, testis, lung, skeletal muscle, liver brain, heart and spleen with highest expression in testis, liver, heart and brain.

The protein localises to the endoplasmic reticulum membrane. The enzyme catalyses a 1,2-diacyl-sn-glycero-3-phosphoethanolamine + L-serine = a 1,2-diacyl-sn-glycero-3-phospho-L-serine + ethanolamine. It catalyses the reaction a 1,2-diacyl-sn-glycero-3-phosphocholine + L-serine = a 1,2-diacyl-sn-glycero-3-phospho-L-serine + choline. It functions in the pathway phospholipid metabolism; phosphatidylserine biosynthesis. Its activity is regulated as follows. Potently inhibited by choline in the mitochondria-associated membrane (MAM). Very little inhibition by choline in the endoplasmic reticulum (ER) per se. Catalyzes a base-exchange reaction in which the polar head group of phosphatidylethanolamine (PE) or phosphatidylcholine (PC) is replaced by L-serine. Catalyzes mainly the conversion of phosphatidylcholine. Also converts, in vitro and to a lesser extent, phosphatidylethanolamine. The protein is Phosphatidylserine synthase 1 (Ptdss1) of Mus musculus (Mouse).